Here is a 229-residue protein sequence, read N- to C-terminus: MAAFGIKSKIFQIMEMTILFLFAISIDRYCFAADEDMLQDVCVADLHSKVKVNGFPCKTNFTAADFSSFAISKPGATNNKFGSKVTTANVEQVPGLNTLGVSLARIDYAPGGINPPHTHPRASEMVFVMEGELDVGFITTANVLVSKQITKGEVFVFPRGLVHFQKNNGKIPAAVVSAFNSQLPGTQSIPITLFGASPTVPDDVLAQTFQINIEDVQQIKSKFAPAKKF.

The signal sequence occupies residues 1–32 (MAAFGIKSKIFQIMEMTILFLFAISIDRYCFA). Residues C42 and C57 are joined by a disulfide bond. N60 is a glycosylation site (N-linked (GlcNAc...) asparagine). The Cupin type-1 domain maps to 69-217 (FAISKPGATN…TFQINIEDVQ (149 aa)). Residues H117, H119, E124, and H163 each coordinate Mn(2+).

Belongs to the germin family. As to quaternary structure, monomer. In the absence of manganese, it forms tetrameric and pentameric forms which show superoxide dismutase activity. It depends on Mn(2+) as a cofactor. Post-translationally, glycosylated.

The protein resides in the secreted. It is found in the extracellular space. The protein localises to the apoplast. The enzyme catalyses 2 superoxide + 2 H(+) = H2O2 + O2. In terms of biological role, may interact with bacterial adhesins thereby protecting the reproductive tissues from microbial attack. Has no oxalate oxidase activity. The protein is Nectarin-1 (NEC1) of Nicotiana plumbaginifolia (Leadwort-leaved tobacco).